The sequence spans 338 residues: CRISPR-associated endonuclease Cas1 (338 aa).

Glu-165, His-230, and Glu-245 together coordinate Mn(2+).

It belongs to the CRISPR-associated endonuclease Cas1 family. In terms of assembly, homodimer, forms a heterotetramer with a Cas2 homodimer. Mg(2+) is required as a cofactor. The cofactor is Mn(2+).

CRISPR (clustered regularly interspaced short palindromic repeat), is an adaptive immune system that provides protection against mobile genetic elements (viruses, transposable elements and conjugative plasmids). CRISPR clusters contain spacers, sequences complementary to antecedent mobile elements, and target invading nucleic acids. CRISPR clusters are transcribed and processed into CRISPR RNA (crRNA). Acts as a dsDNA endonuclease. Involved in the integration of spacer DNA into the CRISPR cassette. The chain is CRISPR-associated endonuclease Cas1 from Fusobacterium nucleatum subsp. nucleatum (strain ATCC 25586 / DSM 15643 / BCRC 10681 / CIP 101130 / JCM 8532 / KCTC 2640 / LMG 13131 / VPI 4355).